A 452-amino-acid polypeptide reads, in one-letter code: MANTFKYYPETMGNSSGYPISLPFPKGSATSAVNVARQLPKYLGHVPSQSVHTQLPSMASLGYFNQPSSTYYAPPAPLQQHQQPPILPPPGLMYTSNNNSNVIPPPVQMIRDGQQQPQQSNQVNGGVSENLDYDISIMSKFIMENAFVAFNANYSTDDQTTDLFFKGISSVLNATRLPSATIFLAIDYLFKYINKLSNGIHSIGGNSINIIYQNTMIAFILANKFNDDKTFTNNSWSQATGILINVINDFERQWLRIFNWELYDSAFLYFEFVKNFEIFKQNQLKPAVAVPTLLSPIVNVGDTRNVNFNLKPTSTNNLLSPVSNYETPMLMPHNMFSSPSYQSNSRSEFSSMNGYYNYYNYNQPRLNYYQQFPNIYSSPISETQFDYDFYNFSSQQQQQQQKQHSLLPAAPQLPPPHVHNQSYGHHLGWKSMDDTINHSRFERNYFPYSAVY.

It belongs to the cyclin family. PCL1,2 subfamily. In terms of assembly, forms a cyclin-CDK complex with PHO85.

Its function is as follows. Cyclin partner of the cyclin-dependent kinase (CDK) PHO85. Has a role in cell integrity and polarized cell growth together with the other PCL1/PCL2 cyclin family members. This chain is PHO85 cyclin CLG1 (CLG1), found in Saccharomyces cerevisiae (strain ATCC 204508 / S288c) (Baker's yeast).